Here is a 75-residue protein sequence, read N- to C-terminus: DNA-directed RNA polymerase subunit omega (75 aa).

This sequence belongs to the RNA polymerase subunit omega family. As to quaternary structure, in cyanobacteria the RNAP catalytic core is composed of 2 alpha, 1 beta, 1 beta', 1 gamma and 1 omega subunit. When a sigma factor is associated with the core the holoenzyme is formed, which can initiate transcription.

The catalysed reaction is RNA(n) + a ribonucleoside 5'-triphosphate = RNA(n+1) + diphosphate. Its function is as follows. Promotes RNA polymerase assembly. Latches the N- and C-terminal regions of the beta' subunit thereby facilitating its interaction with the beta and alpha subunits. The chain is DNA-directed RNA polymerase subunit omega from Gloeothece citriformis (strain PCC 7424) (Cyanothece sp. (strain PCC 7424)).